The chain runs to 496 residues: Glycerol kinase (496 aa).

Thr11 contributes to the ADP binding site. The ATP site is built by Thr11, Thr12, and Ser13. A sn-glycerol 3-phosphate-binding site is contributed by Thr11. Residue Arg15 participates in ADP binding. Sn-glycerol 3-phosphate-binding residues include Arg81, Glu82, Tyr133, and Asp242. Residues Arg81, Glu82, Tyr133, Asp242, and Gln243 each contribute to the glycerol site. ADP-binding residues include Thr264 and Gly307. Thr264, Gly307, Gln311, and Gly408 together coordinate ATP. ADP is bound by residues Gly408 and Asn412.

Belongs to the FGGY kinase family.

It catalyses the reaction glycerol + ATP = sn-glycerol 3-phosphate + ADP + H(+). The protein operates within polyol metabolism; glycerol degradation via glycerol kinase pathway; sn-glycerol 3-phosphate from glycerol: step 1/1. Inhibited by fructose 1,6-bisphosphate (FBP). Its function is as follows. Key enzyme in the regulation of glycerol uptake and metabolism. Catalyzes the phosphorylation of glycerol to yield sn-glycerol 3-phosphate. This is Glycerol kinase from Aromatoleum aromaticum (strain DSM 19018 / LMG 30748 / EbN1) (Azoarcus sp. (strain EbN1)).